A 145-amino-acid chain; its full sequence is Protein SprT-like (145 aa).

Residues 4-140 (TNYVQEVSLA…VCGNCHGKLM (137 aa)) form the SprT-like domain. A Zn(2+)-binding site is contributed by His64. Glu65 is a catalytic residue. A Zn(2+)-binding site is contributed by His68.

It belongs to the SprT family. It depends on Zn(2+) as a cofactor.

It is found in the cytoplasm. This is Protein SprT-like from Streptococcus pyogenes serotype M1.